The sequence spans 149 residues: NADH-quinone oxidoreductase subunit A (149 aa).

A run of 3 helical transmembrane segments spans residues 16–36, 68–88, and 98–118; these read FAVFLLGAFGLCALMLLGAFF, FYLVAMFFVIFDVEALFLYAW, and LGFIEASIFILVLLAGLFYLV.

It belongs to the complex I subunit 3 family. NDH-1 is composed of 13 different subunits. Subunits NuoA, H, J, K, L, M, N constitute the membrane sector of the complex.

The protein resides in the cell inner membrane. The enzyme catalyses a quinone + NADH + 5 H(+)(in) = a quinol + NAD(+) + 4 H(+)(out). In terms of biological role, NDH-1 shuttles electrons from NADH, via FMN and iron-sulfur (Fe-S) centers, to quinones in the respiratory chain. The immediate electron acceptor for the enzyme in this species is believed to be ubiquinone. Couples the redox reaction to proton translocation (for every two electrons transferred, four hydrogen ions are translocated across the cytoplasmic membrane), and thus conserves the redox energy in a proton gradient. This is NADH-quinone oxidoreductase subunit A from Photorhabdus laumondii subsp. laumondii (strain DSM 15139 / CIP 105565 / TT01) (Photorhabdus luminescens subsp. laumondii).